A 448-amino-acid polypeptide reads, in one-letter code: Trigger factor (448 aa).

Residues 167-253 form the PPIase FKBP-type domain; sequence GSIVRVDFVE…IKDIKKRDIP (87 aa).

Belongs to the FKBP-type PPIase family. Tig subfamily.

Its subcellular location is the cytoplasm. It carries out the reaction [protein]-peptidylproline (omega=180) = [protein]-peptidylproline (omega=0). Its function is as follows. Involved in protein export. Acts as a chaperone by maintaining the newly synthesized protein in an open conformation. Functions as a peptidyl-prolyl cis-trans isomerase. The polypeptide is Trigger factor (Borrelia hermsii (strain HS1 / DAH)).